Consider the following 441-residue polypeptide: Ribulose bisphosphate carboxylase large chain (441 aa).

Residues Asn-89 and Thr-139 each contribute to the substrate site. The active-site Proton acceptor is Lys-141. Lys-143 serves as a coordination point for substrate. Lys-167, Asp-169, and Glu-170 together coordinate Mg(2+). Lys-167 carries the post-translational modification N6-carboxylysine. His-260 acts as the Proton acceptor in catalysis. Positions 261, 293, and 345 each coordinate substrate.

It belongs to the RuBisCO large chain family. Type I subfamily. In terms of assembly, heterohexadecamer of 8 large chains and 8 small chains; disulfide-linked. The disulfide link is formed within the large subunit homodimers. Mg(2+) is required as a cofactor. The disulfide bond which can form in the large chain dimeric partners within the hexadecamer appears to be associated with oxidative stress and protein turnover.

The protein localises to the plastid. It is found in the chloroplast. The catalysed reaction is 2 (2R)-3-phosphoglycerate + 2 H(+) = D-ribulose 1,5-bisphosphate + CO2 + H2O. It carries out the reaction D-ribulose 1,5-bisphosphate + O2 = 2-phosphoglycolate + (2R)-3-phosphoglycerate + 2 H(+). In terms of biological role, ruBisCO catalyzes two reactions: the carboxylation of D-ribulose 1,5-bisphosphate, the primary event in carbon dioxide fixation, as well as the oxidative fragmentation of the pentose substrate in the photorespiration process. Both reactions occur simultaneously and in competition at the same active site. This Fouquieria splendens (Ocotillo) protein is Ribulose bisphosphate carboxylase large chain.